We begin with the raw amino-acid sequence, 377 residues long: Polar flagellin F (377 aa).

Coiled-coil stretches lie at residues 98 to 131 and 302 to 339; these read QSAN…ETTS and DSQR…IQDT.

This sequence belongs to the bacterial flagellin family. As to quaternary structure, heteromer of multiple flagellin subunits including FlaA, FlaB/D, FlaC, FlaE and FlaF.

It is found in the secreted. It localises to the bacterial flagellum. Flagellin is the subunit protein which polymerizes to form the filaments of bacterial flagella. The sequence is that of Polar flagellin F (flaF) from Vibrio parahaemolyticus serotype O3:K6 (strain RIMD 2210633).